A 193-amino-acid chain; its full sequence is Early light-induced protein 2, chloroplastic (193 aa).

A chloroplast-targeting transit peptide spans 1-43; the sequence is MATASFNMQSVFAAPSGVLTTRNIRNTNQLFFKRIAPVGVRCM. Positions 46–80 are disordered; it reads GDPIKEDPSVPSTSTSATPPQMPQSPPPPVSKPKV. Residues 54 to 64 show a composition bias toward low complexity; that stretch reads SVPSTSTSATP. Over residues 65–76 the composition is skewed to pro residues; the sequence is PQMPQSPPPPVS. A run of 3 helical transmembrane segments spans residues 102 to 122, 129 to 149, and 173 to 193; these read LAMV…ENVF, GVGW…VPLF, and FAML…GTLV.

It belongs to the ELIP/psbS family.

The protein localises to the plastid. It is found in the chloroplast thylakoid membrane. Probably involved in the integration of pigments into the mature light-harvesting pigment-protein complexes. Light-harvesting chlorophyll (LHC) a/b-binding protein required to ensure a high rate of chlorophyll accumulation during deetiolation in continuous high light. Involved in seed germination. May fulfill a photoprotective functions. Prevents excess accumulation of free chlorophyll by inhibiting the entire chlorophyll biosynthesis pathway (e.g. 5-aminolevulinate synthesis and Mg-protoporphyrin IX chelatase activity), and hence prevent photooxidative stress. This Arabidopsis thaliana (Mouse-ear cress) protein is Early light-induced protein 2, chloroplastic.